We begin with the raw amino-acid sequence, 181 residues long: Protein Syd (181 aa).

It belongs to the Syd family.

The protein resides in the cell inner membrane. In terms of biological role, interacts with the SecY protein in vivo. May bind preferentially to an uncomplexed state of SecY, thus functioning either as a chelating agent for excess SecY in the cell or as a regulatory factor that negatively controls the translocase function. This chain is Protein Syd, found in Shigella flexneri serotype 5b (strain 8401).